Here is a 79-residue protein sequence, read N- to C-terminus: Pyridoxal 5'-phosphate synthase PDX1-like 4 (79 aa).

This sequence belongs to the PdxS/SNZ family.

The chain is Pyridoxal 5'-phosphate synthase PDX1-like 4 (PDX1L4) from Arabidopsis thaliana (Mouse-ear cress).